Reading from the N-terminus, the 525-residue chain is Bifunctional purine biosynthesis protein PurH (525 aa).

The MGS-like domain occupies 1 to 149 (MSDPVIKRAL…KNNESVTVVT (149 aa)).

This sequence belongs to the PurH family.

The catalysed reaction is (6R)-10-formyltetrahydrofolate + 5-amino-1-(5-phospho-beta-D-ribosyl)imidazole-4-carboxamide = 5-formamido-1-(5-phospho-D-ribosyl)imidazole-4-carboxamide + (6S)-5,6,7,8-tetrahydrofolate. It carries out the reaction IMP + H2O = 5-formamido-1-(5-phospho-D-ribosyl)imidazole-4-carboxamide. Its pathway is purine metabolism; IMP biosynthesis via de novo pathway; 5-formamido-1-(5-phospho-D-ribosyl)imidazole-4-carboxamide from 5-amino-1-(5-phospho-D-ribosyl)imidazole-4-carboxamide (10-formyl THF route): step 1/1. It functions in the pathway purine metabolism; IMP biosynthesis via de novo pathway; IMP from 5-formamido-1-(5-phospho-D-ribosyl)imidazole-4-carboxamide: step 1/1. This is Bifunctional purine biosynthesis protein PurH from Pelodictyon phaeoclathratiforme (strain DSM 5477 / BU-1).